We begin with the raw amino-acid sequence, 890 residues long: DNA mismatch repair protein MutS (890 aa).

634–641 (GPNMGGKS) is a binding site for ATP.

It belongs to the DNA mismatch repair MutS family.

This protein is involved in the repair of mismatches in DNA. It is possible that it carries out the mismatch recognition step. This protein has a weak ATPase activity. The sequence is that of DNA mismatch repair protein MutS from Burkholderia pseudomallei (strain 1710b).